The sequence spans 154 residues: Ribonuclease 8 (154 aa).

Residues 1–27 (MAPARAGCCPLLLLLLGLWVAEVLVRA) form the signal peptide. The active-site Proton acceptor is the His-42. 4 cysteine pairs are disulfide-bonded: Cys-50/Cys-93, Cys-64/Cys-118, Cys-82/Cys-133, and Cys-89/Cys-96. Residues 65–69 (KDLNT) and Lys-90 each bind substrate. Catalysis depends on His-149, which acts as the Proton donor.

The protein belongs to the pancreatic ribonuclease family. As to expression, expressed prominently in the placenta and is not detected in any other tissues examined.

It localises to the secreted. Its function is as follows. Has a low ribonuclease activity. This Homo sapiens (Human) protein is Ribonuclease 8 (RNASE8).